Here is a 327-residue protein sequence, read N- to C-terminus: Phenylalanine--tRNA ligase alpha subunit (327 aa).

Mg(2+) is bound at residue E252.

This sequence belongs to the class-II aminoacyl-tRNA synthetase family. Phe-tRNA synthetase alpha subunit type 1 subfamily. Tetramer of two alpha and two beta subunits. Mg(2+) serves as cofactor.

Its subcellular location is the cytoplasm. It catalyses the reaction tRNA(Phe) + L-phenylalanine + ATP = L-phenylalanyl-tRNA(Phe) + AMP + diphosphate + H(+). This Shigella dysenteriae serotype 1 (strain Sd197) protein is Phenylalanine--tRNA ligase alpha subunit.